Reading from the N-terminus, the 333-residue chain is Terminal uridylyltransferase 4 (333 aa).

UTP-binding positions include Ser-54 and 65–68; that span reads SDVD. Mg(2+) contacts are provided by Asp-66 and Asp-68. Arg-121 contributes to the RNA binding site. UTP contacts are provided by residues 144-148, Lys-169, Lys-173, and 188-189; these read GVRNS and SY. The PAP-associated domain occupies 237–302; it reads LGTQVLDFLH…WCIEDPYELN (66 aa).

It belongs to the DNA polymerase type-B-like family. As to quaternary structure, monomer. Mg(2+) serves as cofactor. The cofactor is Mn(2+).

The catalysed reaction is RNA(n) + UTP = RNA(n)-3'-uridine ribonucleotide + diphosphate. Its activity is regulated as follows. The 3' uridylated RNA substrate is involved in the selective incorporation of UTP; UTP binding is favored due to the constraint posed on the positioning of the NTP base by the continuous stacking interactions between Tyr-189 side chain, the bound NTP, and the terminal nucleoside base of the RNA substrate. Terminal uridylyltransferase which, specifically, catalyzes the addition of Us to the 3'-hydroxyl group of single-stranded RNAs with a 3'-terminal U. This chain is Terminal uridylyltransferase 4, found in Trypanosoma brucei brucei (strain 927/4 GUTat10.1).